The sequence spans 647 residues: DNA mismatch repair protein MutL (647 aa).

Disordered regions lie at residues 356-391 (EGSQ…SSIS) and 407-428 (PRPQ…EALP). Residues 413–423 (LRPQYQGSVTS) are compositionally biased toward polar residues.

It belongs to the DNA mismatch repair MutL/HexB family.

In terms of biological role, this protein is involved in the repair of mismatches in DNA. It is required for dam-dependent methyl-directed DNA mismatch repair. May act as a 'molecular matchmaker', a protein that promotes the formation of a stable complex between two or more DNA-binding proteins in an ATP-dependent manner without itself being part of a final effector complex. This Citrifermentans bemidjiense (strain ATCC BAA-1014 / DSM 16622 / JCM 12645 / Bem) (Geobacter bemidjiensis) protein is DNA mismatch repair protein MutL.